The sequence spans 348 residues: Phospho-2-dehydro-3-deoxyheptonate aldolase, Trp-sensitive (348 aa).

The protein belongs to the class-I DAHP synthase family.

It carries out the reaction D-erythrose 4-phosphate + phosphoenolpyruvate + H2O = 7-phospho-2-dehydro-3-deoxy-D-arabino-heptonate + phosphate. Its pathway is metabolic intermediate biosynthesis; chorismate biosynthesis; chorismate from D-erythrose 4-phosphate and phosphoenolpyruvate: step 1/7. Functionally, stereospecific condensation of phosphoenolpyruvate (PEP) and D-erythrose-4-phosphate (E4P) giving rise to 3-deoxy-D-arabino-heptulosonate-7-phosphate (DAHP). The chain is Phospho-2-dehydro-3-deoxyheptonate aldolase, Trp-sensitive (aroH) from Buchnera aphidicola subsp. Baizongia pistaciae (strain Bp).